The sequence spans 724 residues: Phosphoribosylformylglycinamidine synthase subunit PurL (724 aa).

His34 is an active-site residue. An ATP-binding site is contributed by Tyr37. Glu78 is a Mg(2+) binding site. Substrate contacts are provided by residues 79 to 82 (SHNH) and Arg101. The active-site Proton acceptor is the His80. Asp102 contributes to the Mg(2+) binding site. Gln226 contacts substrate. Residue Asp254 coordinates Mg(2+). Substrate is bound at residue 298 to 300 (ESQ). Residues Asp480 and Gly517 each coordinate ATP. Asn518 provides a ligand contact to Mg(2+). Ser520 serves as a coordination point for substrate.

This sequence belongs to the FGAMS family. Monomer. Part of the FGAM synthase complex composed of 1 PurL, 1 PurQ and 2 PurS subunits.

The protein localises to the cytoplasm. The enzyme catalyses N(2)-formyl-N(1)-(5-phospho-beta-D-ribosyl)glycinamide + L-glutamine + ATP + H2O = 2-formamido-N(1)-(5-O-phospho-beta-D-ribosyl)acetamidine + L-glutamate + ADP + phosphate + H(+). It participates in purine metabolism; IMP biosynthesis via de novo pathway; 5-amino-1-(5-phospho-D-ribosyl)imidazole from N(2)-formyl-N(1)-(5-phospho-D-ribosyl)glycinamide: step 1/2. Part of the phosphoribosylformylglycinamidine synthase complex involved in the purines biosynthetic pathway. Catalyzes the ATP-dependent conversion of formylglycinamide ribonucleotide (FGAR) and glutamine to yield formylglycinamidine ribonucleotide (FGAM) and glutamate. The FGAM synthase complex is composed of three subunits. PurQ produces an ammonia molecule by converting glutamine to glutamate. PurL transfers the ammonia molecule to FGAR to form FGAM in an ATP-dependent manner. PurS interacts with PurQ and PurL and is thought to assist in the transfer of the ammonia molecule from PurQ to PurL. The polypeptide is Phosphoribosylformylglycinamidine synthase subunit PurL (Methanopyrus kandleri (strain AV19 / DSM 6324 / JCM 9639 / NBRC 100938)).